The chain runs to 275 residues: Phosphonoacetaldehyde hydrolase (275 aa).

D15 serves as the catalytic Nucleophile. Mg(2+)-binding residues include D15 and A17. K56 serves as the catalytic Schiff-base intermediate with substrate. A Mg(2+)-binding site is contributed by D189.

It belongs to the HAD-like hydrolase superfamily. PhnX family. As to quaternary structure, homodimer. Requires Mg(2+) as cofactor.

The enzyme catalyses phosphonoacetaldehyde + H2O = acetaldehyde + phosphate + H(+). Its function is as follows. Involved in phosphonate degradation. This chain is Phosphonoacetaldehyde hydrolase, found in Pseudomonas fluorescens (strain Pf0-1).